Here is a 485-residue protein sequence, read N- to C-terminus: Podocalyxin (485 aa).

The first 24 residues, 1-24 (MRPTLALSALLLLQLLLLSTPSLS), serve as a signal peptide directing secretion. A disordered region spans residues 22-267 (SLSQDNGNKT…STPSSTWTSG (246 aa)). Topologically, residues 25 to 386 (QDNGNKTDTS…PPEVNEDRFS (362 aa)) are extracellular. Polar residues predominate over residues 26 to 57 (DNGNKTDTSDITSIDQNQDKPATNQPSNATPK). N-linked (GlcNAc...) asparagine glycosylation is found at asparagine 29 and asparagine 82. The segment covering 58 to 109 (SSVQPPTPTSISTSSPDPKATQSSNSSVTTTSDSTTDRTSSSTSTVPTTSNS) has biased composition (low complexity). Polar residues-rich tracts occupy residues 110-128 (GQTV…TALP) and 135-149 (NASS…STKL). N-linked (GlcNAc...) asparagine glycans are attached at residues asparagine 135, asparagine 144, and asparagine 156. Positions 150 to 161 (PSTPTTNSTASP) are enriched in low complexity. Polar residues-rich tracts occupy residues 163 to 176 (QPVS…TTVQ), 186 to 228 (DNTT…QPTG), and 235 to 253 (SVPT…TPVV). An N-linked (GlcNAc...) asparagine glycan is attached at asparagine 187. The segment covering 254–267 (SQGPSTPSSTWTSG) has biased composition (low complexity). An N-linked (GlcNAc...) asparagine glycan is attached at asparagine 287. A helical membrane pass occupies residues 387-407 (LPLIITIVCMASFLLLVAALY). Residues 408 to 485 (GCCHQRISQR…DLDEEEDTHL (78 aa)) lie on the Cytoplasmic side of the membrane. Threonine 445 is subject to Phosphothreonine. Serine 464 bears the Phosphoserine mark. Residue threonine 483 is modified to Phosphothreonine.

Belongs to the podocalyxin family. Monomer; when associated with the membrane raft. Oligomer; when integrated in the apical membrane. Interacts with NHERF2. Interacts (via the C-terminal PDZ-binding motif DTHL) with NHERF1 (via the PDZ domains); the interaction take place early in the secretory pathway and is necessary for its apical membrane sorting. Found in a complex with EZR, PODXL and NHERF2. Associates with the actin cytoskeleton through complex formation with EZR and NHERF2. Interacts (via the C-terminal PDZ-binding motif DTHL) with NHERF1 (via the PDZ domains); interaction is not detected in glomerular epithelium cells. Interacts (via the C-terminal PDZ-binding motif DTHL) with NHERF2 (via the PDZ 1 domain); interaction is detected in glomerular epithelium cells. Interacts with EZR. In terms of processing, N- and O-linked glycosylated. Sialoglycoprotein. As to expression, glomerular epithelium cell (podocyte) (at protein level).

The protein localises to the apical cell membrane. It localises to the cell projection. Its subcellular location is the microvillus. The protein resides in the membrane raft. It is found in the lamellipodium. The protein localises to the filopodium. It localises to the ruffle. Its subcellular location is the membrane. In terms of biological role, involved in the regulation of both adhesion and cell morphology and cancer progression. Functions as an anti-adhesive molecule that maintains an open filtration pathway between neighboring foot processes in the podocyte by charge repulsion. Acts as a pro-adhesive molecule, enhancing the adherence of cells to immobilized ligands, increasing the rate of migration and cell-cell contacts in an integrin-dependent manner. Induces the formation of apical actin-dependent microvilli. Involved in the formation of a preapical plasma membrane subdomain to set up initial epithelial polarization and the apical lumen formation during renal tubulogenesis. Plays a role in cancer development and aggressiveness by inducing cell migration and invasion through its interaction with the actin-binding protein EZR. Affects EZR-dependent signaling events, leading to increased activities of the MAPK and PI3K pathways in cancer cells. In Rattus norvegicus (Rat), this protein is Podocalyxin (Podxl).